A 276-amino-acid chain; its full sequence is Glutamate 5-kinase (276 aa).

Lys-14 provides a ligand contact to ATP. Residues Ser-54, Asp-141, and Asn-157 each contribute to the substrate site. Residues 177 to 178 (SD) and 219 to 225 (TGGMLTK) each bind ATP.

The protein belongs to the glutamate 5-kinase family.

The protein localises to the cytoplasm. The catalysed reaction is L-glutamate + ATP = L-glutamyl 5-phosphate + ADP. Its pathway is amino-acid biosynthesis; L-proline biosynthesis; L-glutamate 5-semialdehyde from L-glutamate: step 1/2. Catalyzes the transfer of a phosphate group to glutamate to form L-glutamate 5-phosphate. This Listeria monocytogenes serotype 4a (strain HCC23) protein is Glutamate 5-kinase.